The chain runs to 424 residues: Protein CapL (424 aa).

This sequence belongs to the UDP-glucose/GDP-mannose dehydrogenase family.

The protein operates within capsule biogenesis; capsule polysaccharide biosynthesis. Required for the biosynthesis of type 1 capsular polysaccharide. This chain is Protein CapL (capL), found in Staphylococcus aureus.